A 416-amino-acid polypeptide reads, in one-letter code: Peptide chain release factor subunit 1 (416 aa).

This sequence belongs to the eukaryotic release factor 1 family. Heterodimer of two subunits, one of which binds GTP.

The protein localises to the cytoplasm. In terms of biological role, directs the termination of nascent peptide synthesis (translation) in response to the termination codons UAA, UAG and UGA. The chain is Peptide chain release factor subunit 1 from Haloquadratum walsbyi (strain DSM 16790 / HBSQ001).